A 138-amino-acid chain; its full sequence is ATP synthase epsilon chain 1 (138 aa).

It belongs to the ATPase epsilon chain family. In terms of assembly, F-type ATPases have 2 components, CF(1) - the catalytic core - and CF(0) - the membrane proton channel. CF(1) has five subunits: alpha(3), beta(3), gamma(1), delta(1), epsilon(1). CF(0) has three main subunits: a, b and c.

The protein localises to the cell inner membrane. In terms of biological role, produces ATP from ADP in the presence of a proton gradient across the membrane. The chain is ATP synthase epsilon chain 1 from Syntrophotalea carbinolica (strain DSM 2380 / NBRC 103641 / GraBd1) (Pelobacter carbinolicus).